A 120-amino-acid polypeptide reads, in one-letter code: Eukaryotic translation initiation factor 4E-binding protein 2 (120 aa).

Residues threonine 37 and threonine 46 each carry the phosphothreonine; by MTOR modification. Positions 54-60 match the YXXXXLphi motif motif; that stretch reads YDRKFLL. A Phosphoserine; by MTOR modification is found at serine 65. Threonine 70 is subject to Phosphothreonine; by MTOR. Serine 83 is modified (phosphoserine). Residues asparagine 99 and asparagine 102 each carry the deamidated asparagine modification. A TOS motif motif is present at residues 116-120; the sequence is FEMDI.

It belongs to the eIF4E-binding protein family. As to quaternary structure, hypophosphorylated EIF4EBP2 interacts with EIF4E; phosphorylation of EIF4EBP2 by mTORC1 causes dissociation of the complex allowing EIF4G1/EIF4G3 to bind and consequent initiation of translation. Interacts (via TOS motif) with RPTOR; promoting phosphorylation by mTORC1. Interacts with PCMT1; required to prevent isoaspartate accumulation and convert isoaspartate to Asp. Post-translationally, phosphorylation at Thr-37, Thr-46, Ser-65, Thr-70 and Ser-83 is mediated by MTOR and corresponds to the hyperphosphorylated form: it abolishes binding to EIF4E by inducing folding of intrinsically disordered regions. First phosphorylated at Thr-37 and Thr-46 by MTOR, inducing folding of region encompassing residues from Pro-18 to Arg-62 of into a four-stranded beta-domain that sequesters the helical YXXXXLPhi motif into a partly buried beta-strand, blocking accessibility to EIF4E. Protein phosphorylated at Thr-37 and Thr-46 is however unstable and subsequent phosphorylation at Ser-65, Thr-70 and Ser-83 is required to stabilize the fold, decreasing affinity for EIF4E by a factor of 4000. Phosphorylated in response to insulin, EGF and PDGF. Deamidated at Asn-99 and Asn-102 to aspartate (Asp) in brain. Deamidation promotes interaction with RPTOR, subsequent phosphorylation by mTORC1 and increased translation, leading to impair kinetics of excitatory synaptic transmission. Deamidation takes place during postnatal development, when the PI3K-Akt-mTOR signaling is reduced, suggesting it acts as a compensatory mechanism to promote translation despite attenuated PI3K-Akt-mTOR signaling in neuron development. Deamidation converts Asn residues into a mixture of Asp and isoaspartate; interactions with PCMT1 is required to prevent isoaspartate accumulation and convert isoaspartate to Asp. As to expression, enriched in brain.

The protein resides in the cytoplasm. It is found in the nucleus. In terms of biological role, repressor of translation initiation involved in synaptic plasticity, learning and memory formation. Regulates EIF4E activity by preventing its assembly into the eIF4F complex: hypophosphorylated form of EIF4EBP2 competes with EIF4G1/EIF4G3 and strongly binds to EIF4E, leading to repress translation. In contrast, hyperphosphorylated form dissociates from EIF4E, allowing interaction between EIF4G1/EIF4G3 and EIF4E, leading to initiation of translation. EIF4EBP2 is enriched in brain and acts as a regulator of synapse activity and neuronal stem cell renewal via its ability to repress translation initiation. Mediates the regulation of protein translation by hormones, growth factors and other stimuli that signal through the MAP kinase and mTORC1 pathways. The sequence is that of Eukaryotic translation initiation factor 4E-binding protein 2 from Mus musculus (Mouse).